We begin with the raw amino-acid sequence, 370 residues long: 3-dehydroquinate synthase (370 aa).

NAD(+)-binding positions include 107 to 111 (GVIGD), 131 to 132 (TS), Lys-144, and Lys-153. The Zn(2+) site is built by Glu-186, His-249, and His-267.

It belongs to the sugar phosphate cyclases superfamily. Dehydroquinate synthase family. Co(2+) serves as cofactor. It depends on Zn(2+) as a cofactor. Requires NAD(+) as cofactor.

The protein resides in the cytoplasm. It carries out the reaction 7-phospho-2-dehydro-3-deoxy-D-arabino-heptonate = 3-dehydroquinate + phosphate. It participates in metabolic intermediate biosynthesis; chorismate biosynthesis; chorismate from D-erythrose 4-phosphate and phosphoenolpyruvate: step 2/7. Catalyzes the conversion of 3-deoxy-D-arabino-heptulosonate 7-phosphate (DAHP) to dehydroquinate (DHQ). This chain is 3-dehydroquinate synthase, found in Jannaschia sp. (strain CCS1).